Here is a 121-residue protein sequence, read N- to C-terminus: MARIKRGTATHARHKKVLKLAKGYRGRAKNCYRIALQRVEKALQYAYRDRRNRKRDFRGLWIIRINAAAREHGLTYGRFMHGLKLVGVDLNRKILAEMAVNHKDDFAKLIETVSSKLAENS.

Belongs to the bacterial ribosomal protein bL20 family.

Its function is as follows. Binds directly to 23S ribosomal RNA and is necessary for the in vitro assembly process of the 50S ribosomal subunit. It is not involved in the protein synthesizing functions of that subunit. The protein is Large ribosomal subunit protein bL20 of Wolbachia pipientis subsp. Culex pipiens (strain wPip).